Here is a 122-residue protein sequence, read N- to C-terminus: Large ribosomal subunit protein bL12 (122 aa).

It belongs to the bacterial ribosomal protein bL12 family. As to quaternary structure, homodimer. Part of the ribosomal stalk of the 50S ribosomal subunit. Forms a multimeric L10(L12)X complex, where L10 forms an elongated spine to which 2 to 4 L12 dimers bind in a sequential fashion. Binds GTP-bound translation factors.

Forms part of the ribosomal stalk which helps the ribosome interact with GTP-bound translation factors. Is thus essential for accurate translation. In Streptococcus thermophilus (strain ATCC BAA-491 / LMD-9), this protein is Large ribosomal subunit protein bL12.